The primary structure comprises 151 residues: Arginine repressor (151 aa).

It belongs to the ArgR family.

The protein resides in the cytoplasm. It participates in amino-acid biosynthesis; L-arginine biosynthesis [regulation]. Functionally, regulates arginine biosynthesis genes. This chain is Arginine repressor, found in Lachnospira eligens (strain ATCC 27750 / DSM 3376 / VPI C15-48 / C15-B4) (Eubacterium eligens).